Reading from the N-terminus, the 560-residue chain is Vesicular glutamate transporter 1 (560 aa).

Residues 1–63 (MEFRQEEFRK…CTCFGLPRRY (63 aa)) are Cytoplasmic-facing. A helical membrane pass occupies residues 64-84 (IIAIMSGLGFCISFGIRCNLG). The Extracellular segment spans residues 85-116 (VAIVSMVNNSTTHRGGHVVMQKAQFNWDPETV). A helical transmembrane segment spans residues 117–137 (GLIHGSFFWGYIVTQIPGGFI). The Cytoplasmic portion of the chain corresponds to 138–140 (CQK). A helical transmembrane segment spans residues 141-161 (FAANRVFGFAIVATSTLNMLI). At 162–169 (PSAARVHY) the chain is on the extracellular side. Residues 170–190 (GCVIFVRILQGLVEGVTYPAC) form a helical membrane-spanning segment. Over 191–208 (HGIWSKWAPPLERSRLAT) the chain is Cytoplasmic. Residues 209-229 (TAFCGSYAGAVVAMPLAGVLV) form a helical membrane-spanning segment. Topologically, residues 230–236 (QYSGWSS) are extracellular. A helical transmembrane segment spans residues 237-257 (VFYVYGSFGIFWYLFWLLVSY). The Cytoplasmic portion of the chain corresponds to 258 to 302 (ESPALHPSISEEERKYIEDAIGESAKLMNPVTKFNTPWRRFFTSM). A helical membrane pass occupies residues 303 to 323 (PVYAIIVANFCRSWTFYLLLI). The Extracellular portion of the chain corresponds to 324–341 (SQPAYFEEVFGFEISKVG). A helical transmembrane segment spans residues 342–362 (LVSALPHLVMTIIVPIGGQIA). Topologically, residues 363-378 (DFLRSRRIMSTTNVRK) are cytoplasmic. Residues 379–399 (LMNCGGFGMEATLLLVVGYSH) traverse the membrane as a helical segment. The Extracellular portion of the chain corresponds to 400-401 (SK). A helical transmembrane segment spans residues 402-422 (GVAISFLVLAVGFSGFAISGF). Topologically, residues 423–435 (NVNHLDIAPRYAS) are cytoplasmic. Residues 436–456 (ILMGISNGVGTLSGMVCPIIV) traverse the membrane as a helical segment. The Extracellular segment spans residues 457-469 (GAMTKHKTREEWQ). Residues 470 to 490 (YVFLIASLVHYGGVIFYGVFA) traverse the membrane as a helical segment. Residues 491-560 (SGEKQPWAEP…PRPPPPVRDY (70 aa)) lie on the Cytoplasmic side of the membrane. The interval 497–560 (WAEPEEMSEE…PRPPPPVRDY (64 aa)) is disordered. Residue Ser-504 is modified to Phosphoserine. The segment covering 520–529 (DESEMEDEAE) has biased composition (acidic residues). Composition is skewed to pro residues over residues 531–540 (PGAPPAPPPS) and 550–560 (PPRPPPPVRDY).

This sequence belongs to the major facilitator superfamily. Sodium/anion cotransporter family. VGLUT subfamily. In terms of assembly, interacts with SHANK3.

Its subcellular location is the cytoplasmic vesicle. The protein resides in the secretory vesicle. The protein localises to the synaptic vesicle membrane. It is found in the cell membrane. It localises to the synapse. Its subcellular location is the synaptosome. The enzyme catalyses L-glutamate(out) = L-glutamate(in). It carries out the reaction chloride(in) = chloride(out). It catalyses the reaction 3 Na(+)(out) + phosphate(out) = 3 Na(+)(in) + phosphate(in). The catalysed reaction is phosphate(in) = phosphate(out). The enzyme catalyses K(+)(in) + H(+)(out) = K(+)(out) + H(+)(in). Chloride channel activity is allosterically activated by lumenal H(+) and Cl(-) leading to synaptic vesicles acidification. The L-glutamate transport activity is allosterically activated by lumenal H(+) and Cl(-). The allosteric activation by H(+) efficiently prevents non-vesicular efflux across the plasma membrane, thereby restricting L-glutamate transport activity to acidic membranes such as synaptic vesicles. In terms of biological role, multifunctional transporter that transports L-glutamate as well as multiple ions such as chloride, proton, potassium, sodium and phosphate. At the synaptic vesicle membrane, mainly functions as an uniporter which transports preferentially L-glutamate but also phosphate from the cytoplasm into synaptic vesicles at presynaptic nerve terminals of excitatory neural cells. The L-glutamate or phosphate uniporter activity is electrogenic and is driven by the proton electrochemical gradient, mainly by the electrical gradient established by the vacuolar H(+)-ATPase across the synaptic vesicle membrane. In addition, functions as a chloride channel that allows a chloride permeation through the synaptic vesicle membrane that affects the proton electrochemical gradient and promotes synaptic vesicles acidification. Moreover, may function as a K(+)/H(+) antiport allowing to maintain the electrical gradient and to decrease chemical gradient and therefore sustain vesicular glutamate uptake. The vesicular K(+)/H(+) antiport activity is electroneutral. At the plasma membrane, following exocytosis, functions as a symporter of Na(+) and phosphate from the extracellular space to the cytoplasm allowing synaptic phosphate homeostasis regulation. The symporter activity is driven by an inside negative membrane potential and is electrogenic. Is necessary for synaptic signaling of visual-evoked responses from photoreceptors. The chain is Vesicular glutamate transporter 1 from Bos taurus (Bovine).